Consider the following 108-residue polypeptide: Large ribosomal subunit protein eL32 (108 aa).

Positions 21–30 are enriched in basic residues; it reads RRPRGRTSKM. The disordered stretch occupies residues 21–44; sequence RRPRGRTSKMRRYEKGKPAMPAIG.

Belongs to the eukaryotic ribosomal protein eL32 family.

The sequence is that of Large ribosomal subunit protein eL32 (rpl32e) from Methanothermobacter thermautotrophicus (strain ATCC 29096 / DSM 1053 / JCM 10044 / NBRC 100330 / Delta H) (Methanobacterium thermoautotrophicum).